Consider the following 679-residue polypeptide: Tripartite terminase subunit 1 (679 aa).

The C3H1-type zinc finger occupies 180–208 (CIYCLNEHMMLPNQGESLPSLMMCVNCKH).

Belongs to the herpesviridae TRM1 protein family. Associates with TRM2 and TRM3 to form the tripartite terminase complex. Interacts with portal protein.

Its subcellular location is the host nucleus. Functionally, component of the molecular motor that translocates viral genomic DNA in empty capsid during DNA packaging. Forms a tripartite terminase complex together with TRM2 and TRM3 in the host cytoplasm. Once the complex reaches the host nucleus, it interacts with the capsid portal vertex. This portal forms a ring in which genomic DNA is translocated into the capsid. TRM1 carries an endonuclease activity that plays an important role for the cleavage of concatemeric viral DNA into unit length genomes. This chain is Tripartite terminase subunit 1, found in Saimiriine herpesvirus 2 (strain 11) (SaHV-2).